A 1977-amino-acid chain; its full sequence is Echinoderm microtubule-associated protein-like 5 (1977 aa).

WD repeat units follow at residues 59–100 (GHSD…TVSV), 104–145 (VHTH…MLSM), 148–187 (GHTDRIFDISWDLYQPNKLVSCGVKHIKFWSLCGNALTPK), 195–233 (GDLQTILCLACARDELTYSGALNGDIYVWKGINLIRTIQ), 235–273 (AHTAGIFSMNACEEGFATGGRDGCIRLWDLTFKPITVID), 280–321 (GYKG…LIMQ), 323–362 (HCEGELWALAVHPTKPLAVTGSDDRSVRIWSLVDHALIAR), 364–403 (NMDEPIRCAAVNADGVHLALGMKDGSLTVLRVRDMTEVVH), 406–445 (DRKEAIHELKYSPDGTYLAVGCNDSSVDIYGVAQRYKKVG), 449–488 (GSLSFITHLDWSSDSKYLQTNDGSGKRLLYKMPGGKEVTS), and 561–601 (GHSA…KLKD). Residues 609–629 (ESLTESNSDESDSDLSDVPEL) form a disordered region. Residues 615-629 (NSDESDSDLSDVPEL) are compositionally biased toward acidic residues. WD repeat units follow at residues 725-766 (GHDD…PLSI), 770-811 (YHQY…KLSV), 814-853 (GSKDKIFVVKMNPYVPDKLITAGIKHMKFWRRAGGGLIGR), 861-900 (GKNDTMMCAVYGWTEEMAFSGTSTGDVCIWRDVFLVKTVK), 901-940 (AHDGPVFSMHALEKGFVTGGKDGVVALWDDSFERCLKTYA), 996-1035 (HMEGEVWGLATHPYLPICATVSDDKTLRIWDLSPSHCMLA), 1038-1077 (KLKKGGRCCCFSPDGKALAVGLNDGSFLMANADTLEDLVS), 1080-1120 (HRKD…RVGV), and 1236-1276 (AHST…HREK). Disordered regions lie at residues 1274 to 1299 (REKKNCDSEESDTDSEEDGGYDSDVT) and 1323 to 1363 (PHLQ…NVGK). The span at 1281 to 1294 (SEESDTDSEEDGGY) shows a compositional bias: acidic residues. Over residues 1326–1337 (QQKEPSVDERQG) the composition is skewed to basic and acidic residues. WD repeat units follow at residues 1420-1471 (EHND…TLSI), 1475-1516 (SHSK…KIAS), 1519-1558 (GHNQRIFVAEFRPDSDTQFVSVGIKHVKFWTLAGRALLSK), 1568-1606 (ARMQTMLAVAFGANNLTFTGTISGDVCVWKDHILCRVVA), 1608-1654 (AHNG…RAFR), 1699-1739 (GHVD…MLNK), 1741-1782 (NLGH…GKKR), 1783-1822 (DRRCAIHDIRFSPDSRYLAVGSSENSVDFYDLTLGPTLNR), 1895-1934 (AEKADVTCACVSHSGISLVTGDDFGMVKLYDFPCPEKFAK), and 1940-1977 (GHSPHVTNIRFTSGDRHVVSAGGDDCSVFVWKCVHTPH).

This sequence belongs to the WD repeat EMAP family. As to expression, highly expressed in brain, especially in hippocampus, cerebellum and olfactory bulb (at protein level).

The protein localises to the cytoplasm. It localises to the cytoskeleton. Its function is as follows. May modify the assembly dynamics of microtubules, such that microtubules are slightly longer, but more dynamic. The sequence is that of Echinoderm microtubule-associated protein-like 5 (Eml5) from Rattus norvegicus (Rat).